A 465-amino-acid chain; its full sequence is Argininosuccinate lyase (465 aa).

The protein belongs to the lyase 1 family. Argininosuccinate lyase subfamily.

The protein localises to the cytoplasm. The catalysed reaction is 2-(N(omega)-L-arginino)succinate = fumarate + L-arginine. The protein operates within amino-acid biosynthesis; L-arginine biosynthesis; L-arginine from L-ornithine and carbamoyl phosphate: step 3/3. This is Argininosuccinate lyase from Clostridium botulinum (strain Eklund 17B / Type B).